The sequence spans 256 residues: Pimeloyl-[acyl-carrier protein] methyl ester esterase (256 aa).

One can recognise an AB hydrolase-1 domain in the interval His15 to Pro242. Substrate contacts are provided by residues Trp22, Ser82–Leu83, and Phe143–Gln147. The Nucleophile role is filled by Ser82. Residues Asp207 and His235 contribute to the active site. A substrate-binding site is contributed by His235.

It belongs to the AB hydrolase superfamily. Carboxylesterase BioH family. In terms of assembly, monomer.

The protein resides in the cytoplasm. The enzyme catalyses 6-carboxyhexanoyl-[ACP] methyl ester + H2O = 6-carboxyhexanoyl-[ACP] + methanol + H(+). Its pathway is cofactor biosynthesis; biotin biosynthesis. Functionally, the physiological role of BioH is to remove the methyl group introduced by BioC when the pimeloyl moiety is complete. It allows to synthesize pimeloyl-ACP via the fatty acid synthetic pathway through the hydrolysis of the ester bonds of pimeloyl-ACP esters. This chain is Pimeloyl-[acyl-carrier protein] methyl ester esterase, found in Shigella boydii serotype 4 (strain Sb227).